Consider the following 295-residue polypeptide: Nuclear transcription factor Y subunit A-2 (295 aa).

Residues 139–165 carry the Subunit association domain (SAD) motif; sequence YVNSKQYHGIIRRRQSRAKAAAVLDQK. Positions 173–198 form a DNA-binding region, NFYA/HAP2-type; that stretch reads KPYMHHSRHLHALRRPRGSGGRFLNT. Positions 178–189 are enriched in basic residues; sequence HSRHLHALRRPR. The interval 178–244 is disordered; sequence HSRHLHALRR…VVHPENGTMN (67 aa). Over residues 197 to 209 the composition is skewed to polar residues; it reads NTKSQNLENSGTN. Residues 216 to 233 show a composition bias toward low complexity; that stretch reads SMQIQSQPKPQQSNSQNS.

The protein belongs to the NFYA/HAP2 subunit family. In terms of assembly, heterotrimeric transcription factor composed of three components, NF-YA, NF-YB and NF-YC. NF-YB and NF-YC must interact and dimerize for NF-YA association and DNA binding. Component of a heat stress-inducible transcriptional complex with NF-YA and NF-YB subunits made, at least, of NFYA2, NFYB3 and DPB3-1 in cooperation with DREB2A. As to expression, ubiquitous. Expressed in seedlings, roots, petioles, hypocotyls, reproductive organ tissues and leaves.

It localises to the nucleus. In terms of biological role, stimulates the transcription of various genes by recognizing and binding to a CCAAT motif in promoters. Promotes the expression of heat stress-inducible genes by contributing to the formation of a heat stress-specific transcriptional complex with NF-Y subunits (e.g. DPB3-1, NF-YA2 and NF-YB3) and DREB2A at the promoter of target genes, thus promoting heat tolerance. The sequence is that of Nuclear transcription factor Y subunit A-2 from Arabidopsis thaliana (Mouse-ear cress).